Reading from the N-terminus, the 126-residue chain is Small ribosomal subunit protein bS6 (126 aa).

Positions L104 to A126 are disordered. Over residues A105–F120 the composition is skewed to basic and acidic residues.

The protein belongs to the bacterial ribosomal protein bS6 family.

Functionally, binds together with bS18 to 16S ribosomal RNA. The polypeptide is Small ribosomal subunit protein bS6 (Caulobacter vibrioides (strain ATCC 19089 / CIP 103742 / CB 15) (Caulobacter crescentus)).